Consider the following 823-residue polypeptide: MDLVDPSQSAAAAAGTQLVKDEVAEKCQKLFQDFLEEFQGSDGELKYQSDAEELIRPERNTLLVSFVDLEQFNQQLATTIQEEFYRVYPYLCRAVRAFARDHGNIPQNKEFYVAFQDLPTRHKIRELTTPRIGSLLRISAQVVRTHPVHPELVSGTFLCLDCQTLVRDVEQQFKYTQPSICRNPVCANRRRFMLDTNKSRFVDFQKVRIQETQAELPRGSIPRSVEVILRAEAVESCQAGDRCDFTGSLIVVPDISQLSTPGVRAETSSRVGGREGYEAEGVQGLRALGVRDLSYKLVFLACYVCPTNPRFGGKELHEEDMTAESIKNQMSVKEWEKVFEMSQDKNLYHNLCTSLFPTVHGNDEVKRGILLMLFGGVPKSTMEGTSLRGDINVCVVGDPSTAKSQFLKHVEEFSPRAVYTSGKASTAAGLTAAVVKDEESHEFVIEAGALMLADNGVCCIDEFDKMDTKDQVAIHEAMEQQTISITKAGVKATLNARTSILAAANPVGGRYDRAKSLKQNVNLSAPIMSRFDLFFILVDECNEVTDYAIARRIVDLHSRIEESIDRVYTVDEVRRYLLFARQFKPKISKESADFIVEQYKRLRQRDGSGVTKSAWRITVRQLESMIRLSEGMARMHCSDEVQPKHVKEAFRLLNKSIIRVETPDVNLDQDDEHEPEDETQEGTNGDAEVPNGVNGHVNGINGHSQESNAAAAKPSLRLNFAEYKRISNLLVQQLRKMEDEDETSQRRSELMNWYLKEIESEIDSEEELINRKQIIDKVIHRLVHYDQILIELTQTELKGTGDEVVAKEEDPYLVVNPNYILED.

The C4-type zinc-finger motif lies at Cys-159–Cys-186. One can recognise an MCM domain in the interval Leu-347–Val-554. Gly-397–Ser-404 lines the ATP pocket. The Arginine finger signature appears at Ser-529–Asp-532. Positions Pro-663–Ala-710 are disordered. Residues Leu-667–Gln-680 are compositionally biased toward acidic residues. Low complexity predominate over residues Asn-691–His-703.

It belongs to the MCM family. In terms of assembly, component of the mcm2-7 complex (RLF-M). The complex forms a toroidal hexameric ring with the proposed subunit order mcm2-mcm6-mcm4-mcm7-mcm3-mcm5 (By simililarity). Begins to associate with zmcm3, mcm4 and mcm7 into mcm complexes at the neurula stage. May replace mmcm6 in the complex that functions during licensing of DNA replication.

The protein resides in the nucleus. It carries out the reaction ATP + H2O = ADP + phosphate + H(+). Functionally, acts as a component of the mcm2-7 complex (mcm complex) which is the putative replicative helicase essential for 'once per cell cycle' DNA replication initiation and elongation in eukaryotic cells. The active ATPase sites in the mcm2-7 ring are formed through the interaction surfaces of two neighboring subunits such that a critical structure of a conserved arginine finger motif is provided in trans relative to the ATP-binding site of the Walker A box of the adjacent subunit. The six ATPase active sites, however, are likely to contribute differentially to the complex helicase activity. The existence of maternal and zygotic forms of mcm3 and mcm6 suggests that specific forms of mcm2-7 complexes may be used during different stages of development. May replace mmcm6 in the mcm2-7 complex. The chain is Zygotic DNA replication licensing factor mcm6-A (zmcm6-a) from Xenopus laevis (African clawed frog).